We begin with the raw amino-acid sequence, 201 residues long: Adenylyl-sulfate kinase (201 aa).

The disordered stretch occupies residues 1–23; it reads MALHDENVVWHSHPVTPQQREQH. 35 to 42 lines the ATP pocket; it reads GLSGSGKS. The active-site Phosphoserine intermediate is the serine 109.

This sequence belongs to the APS kinase family.

It catalyses the reaction adenosine 5'-phosphosulfate + ATP = 3'-phosphoadenylyl sulfate + ADP + H(+). It functions in the pathway sulfur metabolism; hydrogen sulfide biosynthesis; sulfite from sulfate: step 2/3. In terms of biological role, catalyzes the synthesis of activated sulfate. In Escherichia coli O127:H6 (strain E2348/69 / EPEC), this protein is Adenylyl-sulfate kinase.